Reading from the N-terminus, the 180-residue chain is Shikimate kinase (180 aa).

Glycine 14–serine 19 is an ATP binding site. Serine 18 serves as a coordination point for Mg(2+). Positions 36, 60, and 82 each coordinate substrate. Residue arginine 120 coordinates ATP. Arginine 139 contacts substrate.

The protein belongs to the shikimate kinase family. Monomer. It depends on Mg(2+) as a cofactor.

Its subcellular location is the cytoplasm. The catalysed reaction is shikimate + ATP = 3-phosphoshikimate + ADP + H(+). The protein operates within metabolic intermediate biosynthesis; chorismate biosynthesis; chorismate from D-erythrose 4-phosphate and phosphoenolpyruvate: step 5/7. Catalyzes the specific phosphorylation of the 3-hydroxyl group of shikimic acid using ATP as a cosubstrate. In Xylella fastidiosa (strain M23), this protein is Shikimate kinase.